Here is a 313-residue protein sequence, read N- to C-terminus: Lactamase-like protein nscB (313 aa).

Zn(2+)-binding residues include histidine 97, histidine 99, aspartate 101, and histidine 102. The Proton donor/acceptor role is filled by aspartate 101.

Belongs to the metallo-beta-lactamase superfamily. Requires Zn(2+) as cofactor.

It participates in secondary metabolite biosynthesis. Functionally, lactamase-like protein; part of the gene cluster that mediates the biosynthesis of neosartoricin B, a prenylated anthracenone that probably exhibits T-cell antiproliferative activity, suggestive of a physiological role as an immunosuppressive agent. The non-reducing polyketide synthase nscA probably synthesizes and cyclizes the decaketide backbone. The hydrolase nscB then mediates the product release through hydrolysis followed by spontaneous decarboxylation. The prenyltransferase nscD catalyzes the addition of the dimethylallyl group to the aromatic C5. The FAD-dependent monooxygenase nscC is then responsible for the stereospecific hydroxylation at C2. Neosartoricin B can be converted into two additional compounds neosartoricins C and D. Neosartoricin C is a spirocyclic compound that is cyclized through the attack of C3 hydroxyl on C14, followed by dehydration. On the other hand, neosartoricin D is a further cyclized compound in which attack of C2 on C14 in neosartoricin C results in the formation of the acetal-containing dioxabicyclo-octanone ring. Both of these compounds are novel and possibly represent related metabolites of the gene cluster. The sequence is that of Lactamase-like protein nscB from Arthroderma gypseum (strain ATCC MYA-4604 / CBS 118893) (Microsporum gypseum).